A 252-amino-acid chain; its full sequence is Phosphoglycolate phosphatase (252 aa).

The Nucleophile role is filled by Asp13. Mg(2+) contacts are provided by Asp13, Asp15, and Asp192.

This sequence belongs to the HAD-like hydrolase superfamily. CbbY/CbbZ/Gph/YieH family. As to quaternary structure, monomer. Mg(2+) is required as a cofactor. Requires chloride as cofactor.

The catalysed reaction is 2-phosphoglycolate + H2O = glycolate + phosphate. Its pathway is organic acid metabolism; glycolate biosynthesis; glycolate from 2-phosphoglycolate: step 1/1. Specifically catalyzes the dephosphorylation of 2-phosphoglycolate. Is involved in the dissimilation of the intracellular 2-phosphoglycolate formed during the DNA repair of 3'-phosphoglycolate ends, a major class of DNA lesions induced by oxidative stress. This chain is Phosphoglycolate phosphatase, found in Shigella boydii serotype 4 (strain Sb227).